A 234-amino-acid chain; its full sequence is Purine nucleoside phosphorylase DeoD-type (234 aa).

Histidine 4 contacts a purine D-ribonucleoside. Residues glycine 20, arginine 24, arginine 43, and 87 to 90 (RIGS) contribute to the phosphate site. Residues 179–181 (DME) and 203–204 (SD) each bind a purine D-ribonucleoside. Aspartate 204 serves as the catalytic Proton donor.

It belongs to the PNP/UDP phosphorylase family. Homohexamer; trimer of homodimers.

It catalyses the reaction a purine D-ribonucleoside + phosphate = a purine nucleobase + alpha-D-ribose 1-phosphate. It carries out the reaction a purine 2'-deoxy-D-ribonucleoside + phosphate = a purine nucleobase + 2-deoxy-alpha-D-ribose 1-phosphate. Functionally, catalyzes the reversible phosphorolytic breakdown of the N-glycosidic bond in the beta-(deoxy)ribonucleoside molecules, with the formation of the corresponding free purine bases and pentose-1-phosphate. This Shewanella oneidensis (strain ATCC 700550 / JCM 31522 / CIP 106686 / LMG 19005 / NCIMB 14063 / MR-1) protein is Purine nucleoside phosphorylase DeoD-type.